Consider the following 110-residue polypeptide: Phosphoribosyl-AMP cyclohydrolase (110 aa).

D80 contacts Mg(2+). Position 81 (C81) interacts with Zn(2+). Mg(2+) is bound by residues D82 and D84. Residues C97 and C104 each contribute to the Zn(2+) site.

Belongs to the PRA-CH family. In terms of assembly, homodimer. Requires Mg(2+) as cofactor. The cofactor is Zn(2+).

It localises to the cytoplasm. It carries out the reaction 1-(5-phospho-beta-D-ribosyl)-5'-AMP + H2O = 1-(5-phospho-beta-D-ribosyl)-5-[(5-phospho-beta-D-ribosylamino)methylideneamino]imidazole-4-carboxamide. The protein operates within amino-acid biosynthesis; L-histidine biosynthesis; L-histidine from 5-phospho-alpha-D-ribose 1-diphosphate: step 3/9. Functionally, catalyzes the hydrolysis of the adenine ring of phosphoribosyl-AMP. In Clostridium botulinum (strain 657 / Type Ba4), this protein is Phosphoribosyl-AMP cyclohydrolase.